A 389-amino-acid chain; its full sequence is Arrestin-C (389 aa).

Residues 369-389 (AQQEPSGESQEALAAEGNEGS) are disordered.

This sequence belongs to the arrestin family. As to quaternary structure, homodimer; disulfide-linked in response to retinal illumination. Interacts with CXCR4; the interaction is dependent on the C-terminal phosphorylation of CXCR4 and modulates the calcium ion mobilization activity of CXCR4. Interacts with GPR84. In terms of tissue distribution, expressed in cone photoreceptors in the retina (at protein level).

Its subcellular location is the photoreceptor inner segment. It is found in the cell projection. It localises to the cilium. The protein localises to the photoreceptor outer segment. May play a role in an as yet undefined retina-specific signal transduction. Could bind to photoactivated-phosphorylated red/green opsins. The sequence is that of Arrestin-C (ARR3) from Bos taurus (Bovine).